The primary structure comprises 36 residues: Potassium channel toxin alpha-KTx 16.9 (36 aa).

3 disulfides stabilise this stretch: Cys-7-Cys-28, Cys-13-Cys-33, and Cys-17-Cys-35.

It belongs to the short scorpion toxin superfamily. Potassium channel inhibitor family. Alpha-KTx 16 subfamily. Expressed by the venom gland.

The protein localises to the secreted. Functionally, poorly competes with (125)I-kaliotoxin binding on rat brain synaptosome (IC(50)&gt;100 nM). Is a poor Kv1.3/KCNA3 ligand. May have as real target KCa1.1/KCNMA1 channel. Shows weak toxicity on mice. The chain is Potassium channel toxin alpha-KTx 16.9 from Buthus paris (Scorpion).